The primary structure comprises 607 residues: Elongation factor 4 (607 aa).

The 183-residue stretch at 11–193 folds into the tr-type G domain; sequence ENIRNFSIIA…KIVEVVPAPD (183 aa). GTP-binding positions include 23 to 28 and 140 to 143; these read DHGKST and NKID.

It belongs to the TRAFAC class translation factor GTPase superfamily. Classic translation factor GTPase family. LepA subfamily.

The protein localises to the cell membrane. The catalysed reaction is GTP + H2O = GDP + phosphate + H(+). Its function is as follows. Required for accurate and efficient protein synthesis under certain stress conditions. May act as a fidelity factor of the translation reaction, by catalyzing a one-codon backward translocation of tRNAs on improperly translocated ribosomes. Back-translocation proceeds from a post-translocation (POST) complex to a pre-translocation (PRE) complex, thus giving elongation factor G a second chance to translocate the tRNAs correctly. Binds to ribosomes in a GTP-dependent manner. This chain is Elongation factor 4, found in Staphylococcus aureus (strain N315).